The chain runs to 1097 residues: MSSSAIQVAKTATYLPDLVEVQRASFKWFLDQGLIEELESFSPITDYTGKLELHFIGSEYRLKRPRHDVEEAKRRDATFASQMYVTCRLVNKETGEIKEQEVFIGELPLMTERGTFIINGAERVIVNQIVRSPGVYFKDEMDKNGRRTYNASVIPNRGAWLKFETDKNDLLHVRVDKTRKINAHVLMRAMGLSDNDVLDKLRHPEFYKKSIDAANDEGISSEDQALLELYKKLRPGEPPSVSGGQQLLQTRFFDPKRYDLGRVGRYKINKKLRLTIPDTVRTLTHEDVLSTLDYLINLELDVGGASLDDIDHLGNRRVRSVGELLQNQVRVGLNRLERIIKERMTVGETDSLTPAQLVNPKPLVAAIKEFFGSSQLSQFMDQTNPLAELTHKRRISALGPGGLTRERAGFAVRDIHPSHYGRLCPIETPEGPNAGLINSLATHARVNEYGFIETPFWKVEYGVVLKDGDPIYLSADREDEVRVAPGDVATEDDGRISADLIPVRYRQDFEKVPPEQVDYVALSPVQVISVATSLIPFLEHDDANRALMGSNMQRQAVPLLRPERALVGTGLETQVARDSGMVPISRVNGTVTYVDANAIVVQDEDGNDHTHFLQKYQRSNQDTCLNQRPIVRCGDPVIVGQVMADGSACEGGEIALGQNVLIAYMPWEGYNYEDALLVSERLVTDDLYTSVHIEKYEIEARQTKLGPEEITREIPNVAEESLGNLDEMGIIRVGAFVESGDILVGKVTPKGESDQPPEEKLLRAIFGEKARDVRDNSLRVPGTERGRVVDVRIYTREQGDELPPGANMVVRVYVAQRRKIQVGDKMAGRHGNKGIISRILPREDMPYLPDGTPVDIVLNPLGVPSRMNVGQVFELLMGWAASNLDCRVRIVPFDEMHGAEKSQQTVETFLKEAAKQPGKGWVYDPEDPGKLQLRDGRTGLPFDQPVAVGYSHFLKLVHLVDDKIHARSTGPYSLVTQQPLGGKAQQGGQRLGEMEVWALEAYGAAYTLQELLTVKSDDMQGRNEALNAIVKGKPIPRPGTPESFKVLMRELQSLGLDIAVYTDEGKEVDLMQDVNPRRSTPSRPTYESLGVADYDED.

The interval 1072–1097 (QDVNPRRSTPSRPTYESLGVADYDED) is disordered.

The protein belongs to the RNA polymerase beta chain family. In cyanobacteria the RNAP catalytic core is composed of 2 alpha, 1 beta, 1 beta', 1 gamma and 1 omega subunit. When a sigma factor is associated with the core the holoenzyme is formed, which can initiate transcription.

The enzyme catalyses RNA(n) + a ribonucleoside 5'-triphosphate = RNA(n+1) + diphosphate. Functionally, DNA-dependent RNA polymerase catalyzes the transcription of DNA into RNA using the four ribonucleoside triphosphates as substrates. The protein is DNA-directed RNA polymerase subunit beta of Synechococcus sp. (strain CC9605).